The chain runs to 303 residues: D-alanine--D-alanine ligase B (303 aa).

Residues 103–298 (KLLWKGAGLP…YEDLCLKVLD (196 aa)) enclose the ATP-grasp domain. An ATP-binding site is contributed by 129 to 184 (ERQLGLPIFVKPSTEGSSIGVTKVKQPGELRAAFEEARKYDKVVIAEQFIGGGEYT). 3 residues coordinate Mg(2+): Asp252, Glu265, and Asn267.

This sequence belongs to the D-alanine--D-alanine ligase family. Requires Mg(2+) as cofactor. The cofactor is Mn(2+).

The protein resides in the cytoplasm. It catalyses the reaction 2 D-alanine + ATP = D-alanyl-D-alanine + ADP + phosphate + H(+). Its pathway is cell wall biogenesis; peptidoglycan biosynthesis. In terms of biological role, cell wall formation. This is D-alanine--D-alanine ligase B from Chromobacterium violaceum (strain ATCC 12472 / DSM 30191 / JCM 1249 / CCUG 213 / NBRC 12614 / NCIMB 9131 / NCTC 9757 / MK).